Consider the following 263-residue polypeptide: ABC transporter I family member 17 (263 aa).

The ABC transporter domain maps to 29-260 (IRVHDLTRVA…THPMAQRFLQ (232 aa)). 62-69 (GPSGSGKS) provides a ligand contact to ATP.

The protein belongs to the ABC transporter superfamily. ABCI family.

This is ABC transporter I family member 17 (ABCI17) from Arabidopsis thaliana (Mouse-ear cress).